Here is a 286-residue protein sequence, read N- to C-terminus: Shikimate dehydrogenase (NADP(+)) (286 aa).

Residues 19–21 (SVS) and threonine 66 each bind shikimate. Residue lysine 70 is the Proton acceptor of the active site. The shikimate site is built by asparagine 91 and aspartate 106. NADP(+)-binding positions include 130-134 (GAGGS) and alanine 225. A shikimate-binding site is contributed by tyrosine 227. Glycine 248 provides a ligand contact to NADP(+).

This sequence belongs to the shikimate dehydrogenase family. In terms of assembly, homodimer.

The enzyme catalyses shikimate + NADP(+) = 3-dehydroshikimate + NADPH + H(+). The protein operates within metabolic intermediate biosynthesis; chorismate biosynthesis; chorismate from D-erythrose 4-phosphate and phosphoenolpyruvate: step 4/7. Involved in the biosynthesis of the chorismate, which leads to the biosynthesis of aromatic amino acids. Catalyzes the reversible NADPH linked reduction of 3-dehydroshikimate (DHSA) to yield shikimate (SA). This Dehalococcoides mccartyi (strain ATCC BAA-2100 / JCM 16839 / KCTC 5957 / BAV1) protein is Shikimate dehydrogenase (NADP(+)).